Here is a 434-residue protein sequence, read N- to C-terminus: MKFSAYLTTLFIVLFSLFIQTVQAESEVRIVIDEGVDSARPIAIIPFKWNGSDSMPIDVADIISADLRNSGKFNPIAVSKMPQKPTSASEVISDVWSSLGIDAVVVGQVTPNEKGYSIAYQLVDTIGASGNSGEVLSQNQYAVPKNAIRLGAHTISDEVFEKLTAIRGAFRTKIAYVVQKNGGSKPYQVRIADYDGHNQFIVYSSSQPLMSPAWSPDGSKLAYVSFENRKSQLIVHDLQSGARRVIAAFPGHNGAPAFSPDGSKIAFASSKDGVLNIYVMNLGNGTISQLTSGAGNNTEPSWSPDGQSIIFTSDRAGGPQIYQMDVVGNGVSLVSAGRGYSGKISADGSILVMIYGDNIVKKDLATGVTEMLSSTFLDESPSISPNGIMIIYSSTQGLGKVLQLVSADGRFKARLPSSDGQIKFPAWSPYLNKN.

A signal peptide spans 1–24 (MKFSAYLTTLFIVLFSLFIQTVQA).

It belongs to the TolB family. In terms of assembly, the Tol-Pal system is composed of five core proteins: the inner membrane proteins TolA, TolQ and TolR, the periplasmic protein TolB and the outer membrane protein Pal. They form a network linking the inner and outer membranes and the peptidoglycan layer.

It localises to the periplasm. Its function is as follows. Part of the Tol-Pal system, which plays a role in outer membrane invagination during cell division and is important for maintaining outer membrane integrity. This Histophilus somni (strain 2336) (Haemophilus somnus) protein is Tol-Pal system protein TolB.